The following is a 298-amino-acid chain: Putative F-box and FNIP repeat-containing protein R286 (298 aa).

Residues 4 to 48 (LNVLESHVILHIIEFLPDHEKIKFMSTCKSLYEFRCHVTYNNFYV) enclose the F-box domain. FNIP repeat units lie at residues 124-165 (FNKP…LGHN) and 255-297 (WNFD…FISR).

This Acanthamoeba polyphaga (Amoeba) protein is Putative F-box and FNIP repeat-containing protein R286.